The following is a 259-amino-acid chain: 14-3-3-like protein GF14 omega (259 aa).

A phosphoserine mark is found at Ser67, Ser109, and Ser190. Thr211 is subject to Phosphothreonine.

Belongs to the 14-3-3 family. In terms of assembly, interacts with CINV1.

It is found in the nucleus. The protein resides in the cytoplasm. In terms of biological role, is associated with a DNA binding complex that binds to the G box, a well-characterized cis-acting DNA regulatory element found in plant genes. The chain is 14-3-3-like protein GF14 omega (GRF2) from Arabidopsis thaliana (Mouse-ear cress).